Here is a 188-residue protein sequence, read N- to C-terminus: Peptidyl-tRNA hydrolase (188 aa).

Residue Tyr-14 coordinates tRNA. Residue His-19 is the Proton acceptor of the active site. TRNA contacts are provided by Tyr-64, Asn-66, and Asn-112.

The protein belongs to the PTH family. Monomer.

The protein resides in the cytoplasm. It catalyses the reaction an N-acyl-L-alpha-aminoacyl-tRNA + H2O = an N-acyl-L-amino acid + a tRNA + H(+). In terms of biological role, hydrolyzes ribosome-free peptidyl-tRNAs (with 1 or more amino acids incorporated), which drop off the ribosome during protein synthesis, or as a result of ribosome stalling. Functionally, catalyzes the release of premature peptidyl moieties from peptidyl-tRNA molecules trapped in stalled 50S ribosomal subunits, and thus maintains levels of free tRNAs and 50S ribosomes. In Clostridium perfringens (strain ATCC 13124 / DSM 756 / JCM 1290 / NCIMB 6125 / NCTC 8237 / Type A), this protein is Peptidyl-tRNA hydrolase.